Here is a 258-residue protein sequence, read N- to C-terminus: Hemin import ATP-binding protein HmuV (258 aa).

In terms of domain architecture, ABC transporter spans 1–238; the sequence is MLDIDVSNLS…DILERTYRTP (238 aa). 34–41 is an ATP binding site; it reads GENGAGKS.

This sequence belongs to the ABC transporter superfamily. Heme (hemin) importer (TC 3.A.1.14.5) family. As to quaternary structure, the complex is composed of two ATP-binding proteins (HmuV), two transmembrane proteins (HmuU) and a solute-binding protein (HmuT).

The protein localises to the cell inner membrane. Its function is as follows. Part of the ABC transporter complex HmuTUV involved in hemin import. Responsible for energy coupling to the transport system. This is Hemin import ATP-binding protein HmuV from Idiomarina loihiensis (strain ATCC BAA-735 / DSM 15497 / L2-TR).